The primary structure comprises 202 residues: Snake venom metalloproteinase leucurolysin-A (202 aa).

Q1 carries the pyrrolidone carboxylic acid modification. Residues 6-202 enclose the Peptidase M12B domain; that stretch reads RYIELVVVAD…HNPQCILNKP (197 aa). The Ca(2+) site is built by E9 and D93. Disulfide bonds link C117–C197, C157–C181, and C159–C164. Residue H142 coordinates Zn(2+). E143 is a catalytic residue. The Zn(2+) site is built by H146 and H152. Ca(2+)-binding residues include C197 and N200.

It belongs to the venom metalloproteinase (M12B) family. P-I subfamily. In terms of assembly, monomer. It depends on Zn(2+) as a cofactor. In terms of tissue distribution, expressed by the venom gland.

The protein resides in the secreted. Its activity is regulated as follows. Inhibited by EDTA and 2-mercaptoethanol. Inhibited by 1 mM zinc ion and to a lesser extent by 1 mM calcium ion. Its function is as follows. Non-hemorrhagic metalloproteinase that hydrolyzes the alpha chains of fibrinogen, as well as fibrin, fibronectin and casein. Beta and gamma chains are also hydrolyzed, but more slowly. Thrombolytic activity is also observed. Induces detachment of endothelial cells followed by death, and inhibits endothelial cell adhesion to fibronectin. Induces edema in mouse paw. Inhibits ADP-induced platelet aggregation on human platelet-rich plasma with an IC(50) of 2.8 uM. This is Snake venom metalloproteinase leucurolysin-A from Bothrops leucurus (Whitetail lancehead).